We begin with the raw amino-acid sequence, 313 residues long: Ribosomal RNA small subunit methyltransferase H (313 aa).

S-adenosyl-L-methionine-binding positions include 35–37 (GGH), D55, F79, D101, and Q108.

This sequence belongs to the methyltransferase superfamily. RsmH family.

It localises to the cytoplasm. The catalysed reaction is cytidine(1402) in 16S rRNA + S-adenosyl-L-methionine = N(4)-methylcytidine(1402) in 16S rRNA + S-adenosyl-L-homocysteine + H(+). Its function is as follows. Specifically methylates the N4 position of cytidine in position 1402 (C1402) of 16S rRNA. In Salmonella newport (strain SL254), this protein is Ribosomal RNA small subunit methyltransferase H.